The chain runs to 502 residues: Actin nucleation-promoting factor WAS (502 aa).

One can recognise a WH1 domain in the interval 39 to 148 (LGRKCLTLAT…ALVQEKIQKR (110 aa)). The segment at 146-240 (QKRNQRQSGD…KKISKADIGA (95 aa)) is disordered. Polar residues predominate over residues 201–211 (DIQNPDITSSR). Ser-221 is modified (phosphoserine). The CRIB domain occupies 238–251 (IGAPSGFKHVSHVG). Tyr-291 bears the Phosphotyrosine; by FYN and HCK mark. The tract at residues 307-502 (MRRQEPLPPP…DEDEDDEWDD (196 aa)) is disordered. GRSGPLPPXP motif repeat units lie at residues 337–346 (GRSGPLPPVP) and 376–385 (GRSGPLPPPP). Residues 341 to 419 (PLPPVPLGIA…PAPPPLPPAL (79 aa)) show a composition bias toward pro residues. The 18-residue stretch at 430-447 (GRGALLDQIRQGIQLNKT) folds into the WH2 domain. 2 positions are modified to phosphoserine; by CK2: Ser-483 and Ser-484. Over residues 486-502 (EGEDQAGDEDEDDEWDD) the composition is skewed to acidic residues.

Binds the Arp2/3 complex. Interacts with CDC42, RAC, NCK, HCK, FYN, SRC kinase FGR, BTK, ABL1, PSTPIP1, WIP, and to the p85 subunit of PLC-gamma. Interacts (via C-terminus) with ALDOA. Interacts with NCK1 (via SH3 domains). Interacts with FCHSD2. In terms of assembly, (Microbial infection) Interacts with E.coli effector protein EspF(U). Post-translationally, phosphorylated at Tyr-291 by FYN and HCK, inducing WAS effector activity after TCR engagement. Phosphorylation at Tyr-291 enhances WAS activity in promoting actin polymerization and filopodia formation. Expressed predominantly in the thymus. Also found, to a much lesser extent, in the spleen.

The protein localises to the cytoplasm. Its subcellular location is the cytoskeleton. The protein resides in the nucleus. Effector protein for Rho-type GTPases that regulates actin filament reorganization via its interaction with the Arp2/3 complex. Important for efficient actin polymerization. Possible regulator of lymphocyte and platelet function. Mediates actin filament reorganization and the formation of actin pedestals upon infection by pathogenic bacteria. In addition to its role in the cytoplasmic cytoskeleton, also promotes actin polymerization in the nucleus, thereby regulating gene transcription and repair of damaged DNA. Promotes homologous recombination (HR) repair in response to DNA damage by promoting nuclear actin polymerization, leading to drive motility of double-strand breaks (DSBs). This chain is Actin nucleation-promoting factor WAS (WAS), found in Homo sapiens (Human).